Consider the following 179-residue polypeptide: ATP synthase subunit delta, chloroplastic (179 aa).

This sequence belongs to the ATPase delta chain family. F-type ATPases have 2 components, F(1) - the catalytic core - and F(0) - the membrane proton channel. F(1) has five subunits: alpha(3), beta(3), gamma(1), delta(1), epsilon(1). CF(0) has four main subunits: a(1), b(1), b'(1) and c(10-14). The alpha and beta chains form an alternating ring which encloses part of the gamma chain. F(1) is attached to F(0) by a central stalk formed by the gamma and epsilon chains, while a peripheral stalk is formed by the delta, b and b' chains.

It is found in the plastid. The protein localises to the chloroplast thylakoid membrane. F(1)F(0) ATP synthase produces ATP from ADP in the presence of a proton or sodium gradient. F-type ATPases consist of two structural domains, F(1) containing the extramembraneous catalytic core and F(0) containing the membrane proton channel, linked together by a central stalk and a peripheral stalk. During catalysis, ATP synthesis in the catalytic domain of F(1) is coupled via a rotary mechanism of the central stalk subunits to proton translocation. Its function is as follows. This protein is part of the stalk that links CF(0) to CF(1). It either transmits conformational changes from CF(0) to CF(1) or is implicated in proton conduction. This is ATP synthase subunit delta, chloroplastic from Ochrosphaera neapolitana.